A 425-amino-acid polypeptide reads, in one-letter code: Trigger factor (425 aa).

One can recognise a PPIase FKBP-type domain in the interval 163–248 (GDTAVIDFEG…IHEIKTKELP (86 aa)).

The protein belongs to the FKBP-type PPIase family. Tig subfamily.

It is found in the cytoplasm. The catalysed reaction is [protein]-peptidylproline (omega=180) = [protein]-peptidylproline (omega=0). In terms of biological role, involved in protein export. Acts as a chaperone by maintaining the newly synthesized protein in an open conformation. Functions as a peptidyl-prolyl cis-trans isomerase. The polypeptide is Trigger factor (Bacillus mycoides (strain KBAB4) (Bacillus weihenstephanensis)).